We begin with the raw amino-acid sequence, 513 residues long: Putative thymidine phosphorylase (513 aa).

The protein belongs to the thymidine/pyrimidine-nucleoside phosphorylase family. Type 2 subfamily.

The enzyme catalyses thymidine + phosphate = 2-deoxy-alpha-D-ribose 1-phosphate + thymine. The chain is Putative thymidine phosphorylase from Bradyrhizobium diazoefficiens (strain JCM 10833 / BCRC 13528 / IAM 13628 / NBRC 14792 / USDA 110).